The chain runs to 492 residues: ATP synthase subunit beta, chloroplastic (492 aa).

170–177 (GGAGVGKT) contacts ATP.

This sequence belongs to the ATPase alpha/beta chains family. In terms of assembly, F-type ATPases have 2 components, CF(1) - the catalytic core - and CF(0) - the membrane proton channel. CF(1) has five subunits: alpha(3), beta(3), gamma(1), delta(1), epsilon(1). CF(0) has four main subunits: a(1), b(1), b'(1) and c(9-12).

It localises to the plastid. Its subcellular location is the chloroplast thylakoid membrane. It catalyses the reaction ATP + H2O + 4 H(+)(in) = ADP + phosphate + 5 H(+)(out). Its function is as follows. Produces ATP from ADP in the presence of a proton gradient across the membrane. The catalytic sites are hosted primarily by the beta subunits. This Marchantia polymorpha (Common liverwort) protein is ATP synthase subunit beta, chloroplastic.